We begin with the raw amino-acid sequence, 405 residues long: Serpin I2 (405 aa).

Positions methionine 1 to threonine 18 are cleaved as a signal peptide. Asparagine 306 carries an N-linked (GlcNAc...) asparagine glycan.

Belongs to the serpin family. As to expression, expressed in pancreas.

It localises to the secreted. This is Serpin I2 (Serpini2) from Mus musculus (Mouse).